A 781-amino-acid chain; its full sequence is Cadherin-24 (781 aa).

The signal sequence occupies residues 1-22 (MWGLVRLLLAWLGGWGCMGRLA). Residues 23–44 (APVPAWAGSRGHSGPTLLRTRR) constitute a propeptide that is removed on maturation. Residues 45-603 (SWVWNQFFVI…LSPTGLSTGA (559 aa)) are Extracellular-facing. 5 Cadherin domains span residues 46–150 (WVWN…PPVF), 151–259 (PLGP…PPKF), 260–374 (PQSL…PPAF), 375–479 (TQAT…APQL), and 479–592 (LAEP…WPEA). Residues asparagine 446, asparagine 510, and asparagine 525 are each glycosylated (N-linked (GlcNAc...) asparagine). The helical transmembrane segment at 604 to 624 (LLAIVTCMGTLLALVVLFVAL) threads the bilayer. Over 625 to 781 (RRQKQEALMV…LYGAKEPPAP (157 aa)) the chain is Cytoplasmic. Disordered stretches follow at residues 665–700 (LQNP…PGPA) and 731–762 (EGRG…LDDW). The span at 733-746 (RGSSCGSLSSLGSG) shows a compositional bias: low complexity.

In terms of assembly, associates with alpha-, beta- and delta-catenins.

The protein resides in the cell membrane. In terms of biological role, cadherins are calcium-dependent cell adhesion proteins. They preferentially interact with themselves in a homophilic manner in connecting cells; cadherins may thus contribute to the sorting of heterogeneous cell types. Cadherin-24 mediate strong cell-cell adhesion. The chain is Cadherin-24 (Cdh24) from Mus musculus (Mouse).